We begin with the raw amino-acid sequence, 236 residues long: Ubiquinone biosynthesis O-methyltransferase (236 aa).

Arginine 40, glycine 59, aspartate 80, and leucine 124 together coordinate S-adenosyl-L-methionine.

The protein belongs to the methyltransferase superfamily. UbiG/COQ3 family.

It catalyses the reaction a 3-demethylubiquinol + S-adenosyl-L-methionine = a ubiquinol + S-adenosyl-L-homocysteine + H(+). The enzyme catalyses a 3-(all-trans-polyprenyl)benzene-1,2-diol + S-adenosyl-L-methionine = a 2-methoxy-6-(all-trans-polyprenyl)phenol + S-adenosyl-L-homocysteine + H(+). Its pathway is cofactor biosynthesis; ubiquinone biosynthesis. Its function is as follows. O-methyltransferase that catalyzes the 2 O-methylation steps in the ubiquinone biosynthetic pathway. The sequence is that of Ubiquinone biosynthesis O-methyltransferase from Saccharophagus degradans (strain 2-40 / ATCC 43961 / DSM 17024).